Here is a 179-residue protein sequence, read N- to C-terminus: Cytoglobin-2 (179 aa).

A Globin domain is found at proline 18–threonine 167. Residues histidine 81 and histidine 113 each contribute to the heme b site.

It belongs to the globin family. Monomeric.

It localises to the cytoplasm. Its subcellular location is the nucleus. The catalysed reaction is Fe(II)-heme b-[protein] + nitric oxide + O2 = Fe(III)-heme b-[protein] + nitrate. It catalyses the reaction Fe(III)-heme b-[protein] + nitric oxide + H2O = Fe(II)-heme b-[protein] + nitrite + 2 H(+). It carries out the reaction 2 superoxide + 2 H(+) = H2O2 + O2. The enzyme catalyses H2O2 + AH2 = A + 2 H2O. Functionally, probable multifunctional globin with a hexacoordinated heme iron required for the catalysis of various reactions depending on redox condition of the cell as well as oxygen availability. Has a nitric oxide dioxygenase (NOD) activity and is most probably involved in cell-mediated and oxygen-dependent nitric oxide consumption. Under normoxic conditions functions as a nitric oxide dioxygenase (NOD) but under hypoxic conditions the globin may switch its function to that of a nitrite (NO2) reductase (NiR), generating nitric oxide. Could also have peroxidase and superoxide dismutase activities, detoxifying reactive oxygen species and protecting cells against oxidative stress. Also binds dioxygen with low affinity and could function as an oxygen sensor but has probably no function as a respiratory oxygen carrier. The chain is Cytoglobin-2 from Oryzias latipes (Japanese rice fish).